Reading from the N-terminus, the 137-residue chain is Large ribosomal subunit protein uL16 (137 aa).

This sequence belongs to the universal ribosomal protein uL16 family. In terms of assembly, part of the 50S ribosomal subunit.

In terms of biological role, binds 23S rRNA and is also seen to make contacts with the A and possibly P site tRNAs. This is Large ribosomal subunit protein uL16 from Mesorhizobium japonicum (strain LMG 29417 / CECT 9101 / MAFF 303099) (Mesorhizobium loti (strain MAFF 303099)).